We begin with the raw amino-acid sequence, 248 residues long: MKATVRDLDGDDAGEVELPAVFETDYRPDLIKRAVLAAQANRIQDTGTDEYAGLRTPAESPGSGRGMAHVPRQNGRAREVPQAVSGRPAHPPKAEKDRGLDINTKERKLATRSAIAATANADRVEERGHEFDEETDLPLVVSDEFEDLVKTQEAVDVLEALGVYDDIERAEDGKTVRAGRGTTRGRKYTEPKSVLVVTSDDQSLAARNLAGSDVATADEVNVEDLAPGTQAGRLTLWTESALAEVAER.

The tract at residues 44 to 109 is disordered; sequence QDTGTDEYAG…LDINTKERKL (66 aa). A compositionally biased stretch (basic and acidic residues) spans 92–109; the sequence is PKAEKDRGLDINTKERKL.

It belongs to the universal ribosomal protein uL4 family. As to quaternary structure, part of the 50S ribosomal subunit.

One of the primary rRNA binding proteins, this protein initially binds near the 5'-end of the 23S rRNA. It is important during the early stages of 50S assembly. It makes multiple contacts with different domains of the 23S rRNA in the assembled 50S subunit and ribosome. In terms of biological role, forms part of the polypeptide exit tunnel. The sequence is that of Large ribosomal subunit protein uL4 from Natronomonas pharaonis (strain ATCC 35678 / DSM 2160 / CIP 103997 / JCM 8858 / NBRC 14720 / NCIMB 2260 / Gabara) (Halobacterium pharaonis).